The following is a 232-amino-acid chain: Large ribosomal subunit protein uL1 (232 aa).

It belongs to the universal ribosomal protein uL1 family. As to quaternary structure, part of the 50S ribosomal subunit.

Binds directly to 23S rRNA. The L1 stalk is quite mobile in the ribosome, and is involved in E site tRNA release. Its function is as follows. Protein L1 is also a translational repressor protein, it controls the translation of the L11 operon by binding to its mRNA. This Stenotrophomonas maltophilia (strain R551-3) protein is Large ribosomal subunit protein uL1.